The following is a 254-amino-acid chain: Methylthioribulose-1-phosphate dehydratase (254 aa).

Position 110 (C110) interacts with substrate. 2 residues coordinate Zn(2+): H127 and H129. The active-site Proton donor/acceptor is E156. H212 is a Zn(2+) binding site.

Belongs to the aldolase class II family. MtnB subfamily. It depends on Zn(2+) as a cofactor.

The protein resides in the cytoplasm. The catalysed reaction is 5-(methylsulfanyl)-D-ribulose 1-phosphate = 5-methylsulfanyl-2,3-dioxopentyl phosphate + H2O. Its pathway is amino-acid biosynthesis; L-methionine biosynthesis via salvage pathway; L-methionine from S-methyl-5-thio-alpha-D-ribose 1-phosphate: step 2/6. Functionally, catalyzes the dehydration of methylthioribulose-1-phosphate (MTRu-1-P) into 2,3-diketo-5-methylthiopentyl-1-phosphate (DK-MTP-1-P). The polypeptide is Methylthioribulose-1-phosphate dehydratase (Talaromyces marneffei (strain ATCC 18224 / CBS 334.59 / QM 7333) (Penicillium marneffei)).